The primary structure comprises 234 residues: MKILPIKIKGSIFTLLVLYLQNHPVELFKNNLRDKIKNFPTLFKNAPIAINVEKCSNEINWNNIKNAIISCGFNIIGVSGCKNGKLKNNIIKSGLPILSEGKEVFNFFNNINLDDKILSFEKKNYNKTPIFNSPIRSGQKIYANNSDLIITNNVNSGAEVIADGNIHIYGEVRGRVLAGAKGDNTCQIFCTKLFSELVAISGEYLLSGDFSEDTIGNSVKIYMKNKKLHIVKLN.

The protein belongs to the MinC family. As to quaternary structure, interacts with MinD and FtsZ.

Its function is as follows. Cell division inhibitor that blocks the formation of polar Z ring septums. Rapidly oscillates between the poles of the cell to destabilize FtsZ filaments that have formed before they mature into polar Z rings. Prevents FtsZ polymerization. The protein is Probable septum site-determining protein MinC of Buchnera aphidicola subsp. Baizongia pistaciae (strain Bp).